The chain runs to 280 residues: Nitrogenase iron-iron protein alpha chain (280 aa).

Residues C5, C31, and C94 each contribute to the [8Fe-7S] cluster site. C213 contributes to the [8Fe-9S-C-homocitryl] cluster binding site.

It belongs to the NifD/NifK/NifE/NifN family. Hexamer of two alpha, two beta, and two delta chains. Requires [8Fe-7S] cluster as cofactor. [8Fe-9S-C-homocitryl] cluster is required as a cofactor.

The catalysed reaction is N2 + 8 reduced [2Fe-2S]-[ferredoxin] + 16 ATP + 16 H2O = H2 + 8 oxidized [2Fe-2S]-[ferredoxin] + 2 NH4(+) + 16 ADP + 16 phosphate + 6 H(+). This iron-iron protein is part of the nitrogenase complex that catalyzes the key enzymatic reactions in nitrogen fixation. Other nitrogenase complexes utilize a molybdenum-iron protein or a vanadium-iron protein. This Heliomicrobium gestii (Heliobacterium gestii) protein is Nitrogenase iron-iron protein alpha chain (anfD).